We begin with the raw amino-acid sequence, 287 residues long: Probable ketose 3-epimerase (287 aa).

Glu-152 acts as the Proton donor/acceptor in catalysis. Glu-152 and Asp-185 together coordinate Mn(2+). Substrate is bound at residue His-188. His-211 provides a ligand contact to Mn(2+). Arg-217 serves as a coordination point for substrate. Glu-246 (proton donor/acceptor) is an active-site residue. Residue Glu-246 coordinates Mn(2+).

This sequence belongs to the hyi family. It depends on Mn(2+) as a cofactor.

Probably catalyzes the epimerization of ketopentoses and/or ketohexoses at the C3 position. This chain is Probable ketose 3-epimerase, found in Synechocystis sp. (strain ATCC 27184 / PCC 6803 / Kazusa).